A 285-amino-acid polypeptide reads, in one-letter code: Bis(5'-nucleosyl)-tetraphosphatase, symmetrical (285 aa).

Belongs to the Ap4A hydrolase family.

It catalyses the reaction P(1),P(4)-bis(5'-adenosyl) tetraphosphate + H2O = 2 ADP + 2 H(+). Its function is as follows. Hydrolyzes diadenosine 5',5'''-P1,P4-tetraphosphate to yield ADP. The sequence is that of Bis(5'-nucleosyl)-tetraphosphatase, symmetrical from Colwellia psychrerythraea (strain 34H / ATCC BAA-681) (Vibrio psychroerythus).